The chain runs to 312 residues: Cytochrome c biogenesis protein CcsA (312 aa).

A run of 8 helical transmembrane segments spans residues 18-38 (LGILIFYFLLINLPISLLALF), 48-68 (FFTILINLFIALQLIFRWILS), 73-93 (ISNLYESLYFLVWGISLGQLL), 102-122 (IIPVIAIPIELLTIAFACFVL), 148-168 (VMLSYAALIIGSLLSASVLFI), 216-236 (SILVGFVLLTLGLITGAIWAN), 250-267 (TWAFISWLFYAAYLHMRI), and 279-299 (FATSGFFVVLICYLGVNFLGI).

The protein belongs to the CcmF/CycK/Ccl1/NrfE/CcsA family. In terms of assembly, may interact with ccs1.

It is found in the cellular thylakoid membrane. Its function is as follows. Required during biogenesis of c-type cytochromes (cytochrome c6 and cytochrome f) at the step of heme attachment. In Prochlorococcus marinus (strain MIT 9515), this protein is Cytochrome c biogenesis protein CcsA.